The following is a 511-amino-acid chain: ATP synthase subunit alpha, plastid (511 aa).

170–177 (GDRQTGKT) lines the ATP pocket.

The protein belongs to the ATPase alpha/beta chains family. F-type ATPases have 2 components, CF(1) - the catalytic core - and CF(0) - the membrane proton channel. CF(1) has five subunits: alpha(3), beta(3), gamma(1), delta(1), epsilon(1). CF(0) has four main subunits: a, b, b' and c.

The protein resides in the plastid membrane. It catalyses the reaction ATP + H2O + 4 H(+)(in) = ADP + phosphate + 5 H(+)(out). Produces ATP from ADP in the presence of a proton gradient across the membrane. The alpha chain is a regulatory subunit. This chain is ATP synthase subunit alpha, plastid, found in Cuscuta reflexa (Southern Asian dodder).